The following is a 627-amino-acid chain: tRNA uridine 5-carboxymethylaminomethyl modification enzyme MnmG (627 aa).

Residue 14–19 (GAGHAG) participates in FAD binding. 275-289 (GPRYCPSIEDKVVKF) contributes to the NAD(+) binding site.

This sequence belongs to the MnmG family. In terms of assembly, homodimer. Heterotetramer of two MnmE and two MnmG subunits. FAD serves as cofactor.

The protein resides in the cytoplasm. Functionally, NAD-binding protein involved in the addition of a carboxymethylaminomethyl (cmnm) group at the wobble position (U34) of certain tRNAs, forming tRNA-cmnm(5)s(2)U34. The chain is tRNA uridine 5-carboxymethylaminomethyl modification enzyme MnmG from Lachnoclostridium phytofermentans (strain ATCC 700394 / DSM 18823 / ISDg) (Clostridium phytofermentans).